The chain runs to 220 residues: Large ribosomal subunit protein eL15 (220 aa).

The segment covering 197–207 (KKRHEASRGAR) has biased composition (basic and acidic residues). Positions 197-220 (KKRHEASRGARDPWQIAEKLKEEK) are disordered.

The protein belongs to the eukaryotic ribosomal protein eL15 family.

The sequence is that of Large ribosomal subunit protein eL15 from Desulfurococcus amylolyticus (strain DSM 18924 / JCM 16383 / VKM B-2413 / 1221n) (Desulfurococcus kamchatkensis).